A 436-amino-acid polypeptide reads, in one-letter code: Arginine-hydroxylase NDUFAF5, mitochondrial (436 aa).

The transit peptide at 1–25 directs the protein to the mitochondrion; sequence MLRTTFRKGFNLKCFSKDWNQTRQY. Positions 365–436 are disordered; sequence VTLSQQQQQQ…DEINKNKDDK (72 aa). A compositionally biased stretch (low complexity) spans 369 to 380; the sequence is QQQQQQGIEPQQ. 2 stretches are compositionally biased toward basic and acidic residues: residues 391–411 and 421–436; these read PKTDDFVIKRLDYHGNFHFEK and QNKESSDEINKNKDDK.

Belongs to the methyltransferase superfamily.

The protein localises to the mitochondrion. Functionally, involved in the assembly of mitochondrial NADH:ubiquinone oxidoreductase complex (complex I, MT-ND1) at early stages. Probably acts as an arginine hydroxylase. May also have methyltransferase activity. The sequence is that of Arginine-hydroxylase NDUFAF5, mitochondrial from Dictyostelium discoideum (Social amoeba).